Here is a 346-residue protein sequence, read N- to C-terminus: [LysW]-lysine/[LysW]-ornithine hydrolase (346 aa).

Histidine 68 contacts Zn(2+). The active site involves aspartate 70. Residue aspartate 92 coordinates Zn(2+). Glutamate 122 functions as the Proton acceptor in the catalytic mechanism. 3 residues coordinate Zn(2+): glutamate 123, glutamate 146, and histidine 317.

It belongs to the peptidase M20A family. LysK subfamily. It depends on Zn(2+) as a cofactor. Co(2+) is required as a cofactor.

It is found in the cytoplasm. The enzyme catalyses [amino-group carrier protein]-C-terminal-gamma-(L-lysyl)-L-glutamate + H2O = [amino-group carrier protein]-C-terminal-L-glutamate + L-lysine. It carries out the reaction [amino-group carrier protein]-C-terminal-gamma-(L-ornithyl)-L-glutamate + H2O = [amino-group carrier protein]-C-terminal-L-glutamate + L-ornithine. It functions in the pathway amino-acid biosynthesis; L-lysine biosynthesis via AAA pathway; L-lysine from L-alpha-aminoadipate (Thermus route): step 5/5. It participates in amino-acid biosynthesis; L-arginine biosynthesis. Functionally, catalyzes the release of L-lysine from [LysW]-gamma-L-lysine and the release of L-ornithine from [LysW]-L-ornithine. The polypeptide is [LysW]-lysine/[LysW]-ornithine hydrolase (Saccharolobus islandicus (strain Y.G.57.14 / Yellowstone #1) (Sulfolobus islandicus)).